A 175-amino-acid polypeptide reads, in one-letter code: Translation initiation factor IF-3 (175 aa).

Belongs to the IF-3 family. As to quaternary structure, monomer.

It localises to the cytoplasm. IF-3 binds to the 30S ribosomal subunit and shifts the equilibrium between 70S ribosomes and their 50S and 30S subunits in favor of the free subunits, thus enhancing the availability of 30S subunits on which protein synthesis initiation begins. The chain is Translation initiation factor IF-3 from Staphylococcus epidermidis (strain ATCC 35984 / DSM 28319 / BCRC 17069 / CCUG 31568 / BM 3577 / RP62A).